The following is a 446-amino-acid chain: Exodeoxyribonuclease 7 large subunit (446 aa).

It belongs to the XseA family. In terms of assembly, heterooligomer composed of large and small subunits.

It localises to the cytoplasm. It carries out the reaction Exonucleolytic cleavage in either 5'- to 3'- or 3'- to 5'-direction to yield nucleoside 5'-phosphates.. Its function is as follows. Bidirectionally degrades single-stranded DNA into large acid-insoluble oligonucleotides, which are then degraded further into small acid-soluble oligonucleotides. This Streptococcus pyogenes serotype M3 (strain ATCC BAA-595 / MGAS315) protein is Exodeoxyribonuclease 7 large subunit.